A 144-amino-acid chain; its full sequence is Large ribosomal subunit protein uL15 (144 aa).

Residues 1-49 are disordered; sequence MRLNTLSPAAGAKSAAKRVGRGIGSGLGKTAGRGHKGQKSRSGGGVRVG. Positions 21 to 31 are enriched in gly residues; sequence RGIGSGLGKTA.

It belongs to the universal ribosomal protein uL15 family. As to quaternary structure, part of the 50S ribosomal subunit.

In terms of biological role, binds to the 23S rRNA. The protein is Large ribosomal subunit protein uL15 of Shewanella piezotolerans (strain WP3 / JCM 13877).